The sequence spans 677 residues: Envelope glycoprotein (677 aa).

The signal sequence occupies residues 1 to 33 (MGSGYQLLQLPRERFRKTSFLVWVIILFQRAIS). At 34-651 (MPLGIVTNST…DLNLWTGWRQ (618 aa)) the chain is on the extracellular side. An N-linked (GlcNAc...) asparagine; by host glycan is attached at N41. Cystine bridges form between C54-C610, C109-C136, C122-C148, C512-C557, and C602-C609. Residues 55–202 (RDKLSSTSQL…HFWKATPAHE (148 aa)) are receptor-binding. N205, N239, N258, N269, N297, N317, N318, N339, N406, N420, N435, and N463 each carry an N-linked (GlcNAc...) asparagine; by host glycan. Residues 306–486 (NLHFQILSTH…PSQPGFTINT (181 aa)) form a mucin-like region region. Residues 315 to 326 (HTNNSSDQSPAG) show a composition bias toward polar residues. 3 disordered regions span residues 315–349 (HTNN…TDSP), 370–482 (NGET…QPGF), and 489–508 (KVAD…RQNT). Composition is skewed to polar residues over residues 370 to 421 (NGET…ASNE) and 429 to 472 (NPIQ…TSPG). Residues 525-540 (GAAVGLAWIPYFGPAA) form a fusion peptide region. A coiled-coil region spans residues 555–596 (LICGLRQLANETTQALQLFLRATTELRTYSLLNRKAIDFLLQ). N564 is a glycosylation site (N-linked (GlcNAc...) asparagine; by host). A coiled-coil region spans residues 616–635 (WTKNITDEINQIKHDFIDNP). N619 carries an N-linked (GlcNAc...) asparagine; by host glycan. Residues 652–672 (WIPAGIGIIGVIIAIIALLCI) form a helical membrane-spanning segment. S-palmitoyl cysteine; by host attachment occurs at residues C671 and C673. Residues 673–677 (CKILC) are Cytoplasmic-facing.

Belongs to the filoviruses glycoprotein family. In terms of assembly, homotrimer; each monomer consists of a GP1 and a GP2 subunit linked by disulfide bonds. The resulting peplomers (GP1,2) protrude from the virus surface as spikes. Interacts with host integrin alpha-V/ITGAV. Interacts with host CLEC10A. Binds also to host CD209 and CLEC4M/DC-SIGN(R). Interacts with host FOLR1. Interacts with BST2; this interaction inhibits the antiviral effect of BST2 and this allows viral release from infected cells. Interacts with host FCN1; this interaction enhances viral entry. Interacts with host TLR4; this interaction induces cell death in T-lymphocytes or proinflammatory cytokines and SOCS1 production in monocytes. Interacts with host entry receptor NPC1. As to quaternary structure, GP1 and GP2delta are part of GP1,2delta soluble complexes released by ectodomain shedding. In terms of processing, the signal peptide region modulates GP's high mannose glycosylation, thereby determining the efficiency of the interactions with DC-SIGN(R). N-glycosylated. Post-translationally, O-glycosylated in the mucin-like region. In terms of processing, palmitoylation of GP2 is not required for its function. Specific enzymatic cleavages in vivo yield mature proteins. The precursor is processed into GP1 and GP2 by host cell furin in the trans Golgi, and maybe by other host proteases, to yield the mature GP1 and GP2 proteins. The cleavage site corresponds to the furin optimal cleavage sequence [KR]-X-[KR]-R. This cleavage does not seem to be required for function. After the internalization of the virus into cell endosomes, GP1 C-terminus is removed by the endosomal proteases cathepsin B, cathepsin L, or both, leaving a 19-kDa N-terminal fragment which is further digested by cathepsin B. Proteolytic processing of GP1,2 by host ADAM17 can remove the transmembrane anchor of GP2 and leads to shedding of complexes consisting in GP1 and truncated GP2 (GP1,2delta).

It localises to the virion membrane. The protein resides in the host cell membrane. Its subcellular location is the secreted. Trimeric GP1,2 complexes form the virion surface spikes and mediate the viral entry processes, with GP1 acting as the receptor-binding subunit and GP2 as the membrane fusion subunit. At later times of infection, down-regulates the expression of various host cell surface molecules that are essential for immune surveillance and cell adhesion. Down-modulates several integrins including ITGA1, ITGA2, ITGA3, ITGA4, ITGA5, ITGA6, ITGAV and ITGB1. This decrease in cell adhesion molecules may lead to cell detachment, contributing to the disruption of blood vessel integrity and hemorrhages developed during infection (cytotoxicity). Interacts with host TLR4 and thereby stimulates the differentiation and activation of monocytes leading to bystander death of T-lymphocytes. Down-regulates as well the function of host natural killer cells. Counteracts the antiviral effect of host BST2/tetherin that restricts release of progeny virions from infected cells. However, cooperates with VP40 and host BST2 to activate canonical NF-kappa-B pathway in a manner dependent on neddylation. In terms of biological role, functions as a decoy for anti-GP1,2 antibodies thereby contributing to viral immune evasion. Interacts and activates host macrophages and dendritic cells inducing up-regulation of cytokine transcription. This effect is mediated throught activation of host TLR4. Its function is as follows. Responsible for binding to the receptor(s) on target cells. Interacts with CD209/DC-SIGN and CLEC4M/DC-SIGNR which act as cofactors for virus entry into dendritic cells (DCs) and endothelial cells. Binding to the macrophage specific lectin CLEC10A also seems to enhance virus infectivity. Interaction with FOLR1/folate receptor alpha may be a cofactor for virus entry in some cell types, although results are contradictory. Members of the Tyro3 receptor tyrosine kinase family also seem to be cell entry factors in filovirus infection. Once attached, the virions are internalized through clathrin-dependent endocytosis and/or macropinocytosis. After internalization of the virus into the endosomes of the host cell, proteolysis of GP1 by two cysteine proteases, CTSB/cathepsin B and CTSL/cathepsin L removes the glycan cap and allows GP1 binding to the host entry receptor NPC1. NPC1-binding, Ca(2+) and acidic pH induce a conformational change of GP2, which unmasks its fusion peptide and permit membranes fusion. Functionally, acts as a class I viral fusion protein. Under the current model, the protein has at least 3 conformational states: pre-fusion native state, pre-hairpin intermediate state, and post-fusion hairpin state. During viral and target cell membrane fusion, the coiled coil regions (heptad repeats) assume a trimer-of-hairpins structure, positioning the fusion peptide in close proximity to the C-terminal region of the ectodomain. The formation of this structure appears to drive apposition and subsequent fusion of viral and target cell membranes. Responsible for penetration of the virus into the cell cytoplasm by mediating the fusion of the membrane of the endocytosed virus particle with the endosomal membrane. Low pH in endosomes induces an irreversible conformational change in GP2, releasing the fusion hydrophobic peptide. The protein is Envelope glycoprotein (GP) of Homo sapiens (Human).